We begin with the raw amino-acid sequence, 330 residues long: Ribosomal RNA small subunit methyltransferase C (330 aa).

The protein belongs to the methyltransferase superfamily. RsmC family. In terms of assembly, monomer.

The protein localises to the cytoplasm. It catalyses the reaction guanosine(1207) in 16S rRNA + S-adenosyl-L-methionine = N(2)-methylguanosine(1207) in 16S rRNA + S-adenosyl-L-homocysteine + H(+). Its function is as follows. Specifically methylates the guanine in position 1207 of 16S rRNA in the 30S particle. This Haemophilus influenzae (strain PittEE) protein is Ribosomal RNA small subunit methyltransferase C.